Consider the following 98-residue polypeptide: Small ribosomal subunit protein bS6 (98 aa).

It belongs to the bacterial ribosomal protein bS6 family.

In terms of biological role, binds together with bS18 to 16S ribosomal RNA. The protein is Small ribosomal subunit protein bS6 of Moorella thermoacetica (strain ATCC 39073 / JCM 9320).